A 321-amino-acid chain; its full sequence is Phosphate-import protein PhnD (321 aa).

The signal sequence occupies residues 1-22 (MKIRAHHKIATAAACVALLASA). Residue Cys23 is the site of N-palmitoyl cysteine attachment. Cys23 carries the S-diacylglycerol cysteine lipid modification.

Belongs to the phosphate/phosphite/phosphonate binding protein family. The complex is composed of two ATP-binding proteins (PhnC), two transmembrane proteins (PhnE) and a solute-binding protein (PhnD).

It localises to the cell membrane. Part of the ABC transporter complex PhnCDE involved in phosphate import. Responsible for phosphate binding. The protein is Phosphate-import protein PhnD (phnD) of Mycolicibacterium smegmatis (strain ATCC 700084 / mc(2)155) (Mycobacterium smegmatis).